Here is a 600-residue protein sequence, read N- to C-terminus: Elongation factor 4 (600 aa).

Residues 5–187 (KYIRNFSIIA…AIVNKLPPPK (183 aa)) enclose the tr-type G domain. Residues 17 to 22 (DHGKST) and 134 to 137 (NKID) contribute to the GTP site.

The protein belongs to the TRAFAC class translation factor GTPase superfamily. Classic translation factor GTPase family. LepA subfamily.

It is found in the cell inner membrane. The catalysed reaction is GTP + H2O = GDP + phosphate + H(+). Functionally, required for accurate and efficient protein synthesis under certain stress conditions. May act as a fidelity factor of the translation reaction, by catalyzing a one-codon backward translocation of tRNAs on improperly translocated ribosomes. Back-translocation proceeds from a post-translocation (POST) complex to a pre-translocation (PRE) complex, thus giving elongation factor G a second chance to translocate the tRNAs correctly. Binds to ribosomes in a GTP-dependent manner. This is Elongation factor 4 from Rickettsia felis (strain ATCC VR-1525 / URRWXCal2) (Rickettsia azadi).